Consider the following 258-residue polypeptide: Thiazole synthase (258 aa).

Catalysis depends on Lys-100, which acts as the Schiff-base intermediate with DXP. 1-deoxy-D-xylulose 5-phosphate-binding positions include Gly-161, 187–188, and 209–210; these read AG and NS.

The protein belongs to the ThiG family. In terms of assembly, homotetramer. Forms heterodimers with either ThiH or ThiS.

Its subcellular location is the plastid. The protein localises to the chloroplast. The catalysed reaction is [ThiS sulfur-carrier protein]-C-terminal-Gly-aminoethanethioate + 2-iminoacetate + 1-deoxy-D-xylulose 5-phosphate = [ThiS sulfur-carrier protein]-C-terminal Gly-Gly + 2-[(2R,5Z)-2-carboxy-4-methylthiazol-5(2H)-ylidene]ethyl phosphate + 2 H2O + H(+). Its pathway is cofactor biosynthesis; thiamine diphosphate biosynthesis. Functionally, catalyzes the rearrangement of 1-deoxy-D-xylulose 5-phosphate (DXP) to produce the thiazole phosphate moiety of thiamine. Sulfur is provided by the thiocarboxylate moiety of the carrier protein ThiS. In vitro, sulfur can be provided by H(2)S. The chain is Thiazole synthase from Cyanidioschyzon merolae (strain NIES-3377 / 10D) (Unicellular red alga).